Reading from the N-terminus, the 186-residue chain is Lipid A palmitoyltransferase PagP (186 aa).

The signal sequence occupies residues 1–25; it reads MKVSKYVAIFFFVFIQLISVGKVFA. Residues His58, Asp101, and Ser102 contribute to the active site.

This sequence belongs to the lipid A palmitoyltransferase family. In terms of assembly, homodimer.

The protein localises to the cell outer membrane. It catalyses the reaction lipid A (E. coli) + a 1-hexadecanoyl-2-acyl-sn-glycero-3-phosphocholine = hepta-acyl lipid A (E. coli) + a 2-acyl-sn-glycero-3-phosphocholine. It carries out the reaction lipid IIA + a 1-hexadecanoyl-2-acyl-sn-glycero-3-phosphocholine = lipid IIB + a 2-acyl-sn-glycero-3-phosphocholine. The enzyme catalyses lipid IVA (E. coli) + a 1-hexadecanoyl-2-acyl-sn-glycero-3-phosphocholine = lipid IVB (E. coli) + a 2-acyl-sn-glycero-3-phosphocholine. In terms of biological role, transfers a palmitate residue from the sn-1 position of a phospholipid to the N-linked hydroxymyristate on the proximal unit of lipid A or its precursors. The chain is Lipid A palmitoyltransferase PagP from Escherichia coli O6:K15:H31 (strain 536 / UPEC).